The following is a 450-amino-acid chain: Methionine aminopeptidase 2 (450 aa).

A disordered region spans residues 1–99 (MAVQAPEVDK…LFPNSQYPEG (99 aa)). Residues 33–49 (GDEDAENEESDEDDDQG) show a composition bias toward acidic residues. Residues 60–75 (KKKRKRKPKKKKKKGV) show a composition bias toward basic residues. His200 provides a ligand contact to substrate. 3 residues coordinate a divalent metal cation: Asp220, Asp231, and His300. Position 308 (His308) interacts with substrate. A divalent metal cation is bound by residues Glu336 and Glu431.

Belongs to the peptidase M24A family. Methionine aminopeptidase eukaryotic type 2 subfamily. Co(2+) serves as cofactor. Requires Zn(2+) as cofactor. The cofactor is Mn(2+). It depends on Fe(2+) as a cofactor.

It localises to the cytoplasm. The catalysed reaction is Release of N-terminal amino acids, preferentially methionine, from peptides and arylamides.. Functionally, cotranslationally removes the N-terminal methionine from nascent proteins. The N-terminal methionine is often cleaved when the second residue in the primary sequence is small and uncharged (Met-Ala-, Cys, Gly, Pro, Ser, Thr, or Val). The polypeptide is Methionine aminopeptidase 2 (Uncinocarpus reesii (strain UAMH 1704)).